A 92-amino-acid chain; its full sequence is Putative pterin-4-alpha-carbinolamine dehydratase (92 aa).

It belongs to the pterin-4-alpha-carbinolamine dehydratase family.

It catalyses the reaction (4aS,6R)-4a-hydroxy-L-erythro-5,6,7,8-tetrahydrobiopterin = (6R)-L-erythro-6,7-dihydrobiopterin + H2O. The protein is Putative pterin-4-alpha-carbinolamine dehydratase of Picosynechococcus sp. (strain ATCC 27264 / PCC 7002 / PR-6) (Agmenellum quadruplicatum).